Reading from the N-terminus, the 377-residue chain is tRNA-queuosine alpha-mannosyltransferase (377 aa).

Belongs to the glycosyltransferase group 1 family. Glycosyltransferase 4 subfamily.

The catalysed reaction is queuosine(34) in tRNA(Asp) + GDP-alpha-D-mannose = O-4''-alpha-D-mannosylqueuosine(34) in tRNA(Asp) + GDP + H(+). Functionally, glycosyltransferase that specifically catalyzes mannosylation of cytoplasmic tRNA(Asp) modified with queuosine at position 34 (queuosine(34)). Mannosylates the cyclopentene moiety of queuosine(34) in tRNA(Asp) to form mannosyl-queuosine(34). In Drosophila melanogaster (Fruit fly), this protein is tRNA-queuosine alpha-mannosyltransferase.